The primary structure comprises 370 residues: Dual-specificity RNA methyltransferase RlmN (370 aa).

Glu-93 serves as the catalytic Proton acceptor. One can recognise a Radical SAM core domain in the interval 99–337 (EEGRGTLCVS…VTTVRKTRGD (239 aa)). Cys-106 and Cys-343 are oxidised to a cystine. Residues Cys-113, Cys-117, and Cys-120 each coordinate [4Fe-4S] cluster. Residues 167 to 168 (GE), Ser-199, 221 to 223 (SLH), and Asn-300 contribute to the S-adenosyl-L-methionine site. Cys-343 (S-methylcysteine intermediate) is an active-site residue.

It belongs to the radical SAM superfamily. RlmN family. [4Fe-4S] cluster is required as a cofactor.

It is found in the cytoplasm. It catalyses the reaction adenosine(2503) in 23S rRNA + 2 reduced [2Fe-2S]-[ferredoxin] + 2 S-adenosyl-L-methionine = 2-methyladenosine(2503) in 23S rRNA + 5'-deoxyadenosine + L-methionine + 2 oxidized [2Fe-2S]-[ferredoxin] + S-adenosyl-L-homocysteine. It carries out the reaction adenosine(37) in tRNA + 2 reduced [2Fe-2S]-[ferredoxin] + 2 S-adenosyl-L-methionine = 2-methyladenosine(37) in tRNA + 5'-deoxyadenosine + L-methionine + 2 oxidized [2Fe-2S]-[ferredoxin] + S-adenosyl-L-homocysteine. Functionally, specifically methylates position 2 of adenine 2503 in 23S rRNA and position 2 of adenine 37 in tRNAs. m2A2503 modification seems to play a crucial role in the proofreading step occurring at the peptidyl transferase center and thus would serve to optimize ribosomal fidelity. In Francisella tularensis subsp. tularensis (strain WY96-3418), this protein is Dual-specificity RNA methyltransferase RlmN.